Reading from the N-terminus, the 128-residue chain is Fluoride-specific ion channel FluC (128 aa).

A run of 4 helical transmembrane segments spans residues Phe10–Trp30, Thr40–Ala60, Ala71–Val91, and Ala102–Ala122. Na(+)-binding residues include Gly78 and Thr81.

It belongs to the fluoride channel Fluc/FEX (TC 1.A.43) family.

It is found in the cell inner membrane. It catalyses the reaction fluoride(in) = fluoride(out). Its activity is regulated as follows. Na(+) is not transported, but it plays an essential structural role and its presence is essential for fluoride channel function. Functionally, fluoride-specific ion channel. Important for reducing fluoride concentration in the cell, thus reducing its toxicity. The protein is Fluoride-specific ion channel FluC of Bordetella petrii (strain ATCC BAA-461 / DSM 12804 / CCUG 43448).